The primary structure comprises 247 residues: Large ribosomal subunit protein uL3 (247 aa).

Disordered regions lie at residues 124 to 145 (RLGQSRGPMAHGSRYHRRPGSM) and 218 to 247 (VGQEVKAEAKDTASTEKKQAETKNDSASAE). The span at 222–241 (VKAEAKDTASTEKKQAETKN) shows a compositional bias: basic and acidic residues.

It belongs to the universal ribosomal protein uL3 family. In terms of assembly, part of the 50S ribosomal subunit. Forms a cluster with proteins L14 and L19.

In terms of biological role, one of the primary rRNA binding proteins, it binds directly near the 3'-end of the 23S rRNA, where it nucleates assembly of the 50S subunit. The chain is Large ribosomal subunit protein uL3 from Oenococcus oeni (strain ATCC BAA-331 / PSU-1).